A 301-amino-acid chain; its full sequence is MSEHDMHLLDSAPFGRILPAMVTPMKSDGSVDFAAAQKLAKYLVADGADGLVVNGTTGESPVTHMDEKVELVRAVKEVVDVPVISGAGSNDTAHTVRMVEQTQEAGADAVLVVMPYYSRPSQDGIVGHYKAVDESAEKPIIVYDVPGRTGLKVKVGTYDRLAELEHVKAVKDATGDLAAAVEKQQRTGLAWYSGDDGLFLPFLSIGAVGIISVIAHVASNPMQQLVQAFDRGDITTARRLANQLAPLVHALNGDGYQAVMAKAALKVKGVIPSTTMRLPNIGPDATQLDKAEEGMRAAGLL.

Thr-57 lines the pyruvate pocket. Residue Tyr-143 is the Proton donor/acceptor of the active site. Lys-171 (schiff-base intermediate with substrate) is an active-site residue. Ile-211 contacts pyruvate.

The protein belongs to the DapA family. In terms of assembly, homotetramer; dimer of dimers.

The protein localises to the cytoplasm. The enzyme catalyses L-aspartate 4-semialdehyde + pyruvate = (2S,4S)-4-hydroxy-2,3,4,5-tetrahydrodipicolinate + H2O + H(+). It functions in the pathway amino-acid biosynthesis; L-lysine biosynthesis via DAP pathway; (S)-tetrahydrodipicolinate from L-aspartate: step 3/4. Catalyzes the condensation of (S)-aspartate-beta-semialdehyde [(S)-ASA] and pyruvate to 4-hydroxy-tetrahydrodipicolinate (HTPA). The polypeptide is 4-hydroxy-tetrahydrodipicolinate synthase (Bifidobacterium longum (strain DJO10A)).